The sequence spans 475 residues: Solute carrier family 46 member 2 (475 aa).

The Cytoplasmic portion of the chain corresponds to 1–23; the sequence is MSPEVTCPRRGHLPRFHPRTWVE. Residues 24 to 44 traverse the membrane as a helical segment; the sequence is PVVASSQVAASLYDAGLLLVV. Residues 45–78 lie on the Extracellular side of the membrane; that stretch reads KASYGTGGSSNHSASPSPRGALEDQQQRAISNFY. Asn55 is a glycosylation site (N-linked (GlcNAc...) asparagine). The chain crosses the membrane as a helical span at residues 79–99; the sequence is IIYNLVVGLSPLLSAYGLGWL. Residues 100–108 are Cytoplasmic-facing; sequence SDRYHRKIS. Residues 109–129 traverse the membrane as a helical segment; the sequence is ICMSLLGFLLSRLGLLLKVLL. The Extracellular segment spans residues 130-138; it reads DWPVEVLYG. A helical membrane pass occupies residues 139–159; it reads AAALNGLFGGFSAFWSGVMAL. At 160–172 the chain is on the cytoplasmic side; it reads GSLGSSEGRRSVR. The chain crosses the membrane as a helical span at residues 173–193; sequence LILIDLMLGLAGFCGSMASGH. Residues 194-205 are Extracellular-facing; it reads LFKQMAGHSGQG. A helical transmembrane segment spans residues 206–226; it reads LILTACSVSCASFALLYSLLV. The Cytoplasmic segment spans residues 227–282; that stretch reads LKVPESVAKPSQELPAVDTVSGTVGTYRTLDPDQLDQQYAVGHPPSPGKAKPHKTT. Residues 283–303 form a helical membrane-spanning segment; it reads IALLFVGAIIYDLAVVGTVDV. At 304–320 the chain is on the extracellular side; that stretch reads IPLFVLREPLGWNQVQV. A helical membrane pass occupies residues 321–341; that stretch reads GYGMAAGYTIFITSFLGVLVF. Over 342 to 347 the chain is Cytoplasmic; that stretch reads SRCFRD. A helical transmembrane segment spans residues 348-368; sequence TTMIMIGMVSFGSGALLLAFV. Over 369 to 370 the chain is Extracellular; the sequence is KE. A helical membrane pass occupies residues 371 to 391; that stretch reads TYMFYIARAVMLFALIPVTTI. The Cytoplasmic portion of the chain corresponds to 392–406; sequence RSAMSKLIKGSSYGK. A helical membrane pass occupies residues 407 to 427; the sequence is VFVILQLSLALTGVVTSTLYN. The Extracellular segment spans residues 428-435; it reads KIYQLTMD. A helical transmembrane segment spans residues 436–456; that stretch reads MFVGSCFALSSFLSFLAIIPI. The Cytoplasmic segment spans residues 457–475; sequence SIVAYKQVPLSPYGDIIEK.

Belongs to the major facilitator superfamily. SLC46A family. Post-translationally, glycosylated. Strongly expressed in the adult thymus. Expressed in spleen, lymph nodes, thymus, PBL, bone marrow and fetal liver. Expressed in monocytes and pre-dendridic cells.

Its subcellular location is the endosome membrane. The protein localises to the cell membrane. The enzyme catalyses N-acetyl-beta-D-glucosaminyl-(1-&gt;4)-1,6-anhydro-N-acetyl-beta-D-muramoyl-L-alanyl-gamma-D-glutamyl-meso-2,6-diaminopimeloyl-D-alanine(out) + n H(+)(out) = N-acetyl-beta-D-glucosaminyl-(1-&gt;4)-1,6-anhydro-N-acetyl-beta-D-muramoyl-L-alanyl-gamma-D-glutamyl-meso-2,6-diaminopimeloyl-D-alanine(in) + n H(+)(in). The catalysed reaction is L-alanyl-gamma-D-glutamyl-meso-2,6-diaminopimelate(out) + n H(+)(out) = L-alanyl-gamma-D-glutamyl-meso-2,6-diaminopimelate(in) + n H(+)(in). It carries out the reaction N-acetyl-D-muramoyl-L-alanyl-D-isoglutamine(out) + n H(+)(out) = N-acetyl-D-muramoyl-L-alanyl-D-isoglutamine(in) + n H(+)(in). It catalyses the reaction 2',3'-cGAMP(out) + n H(+)(out) = 2',3'-cGAMP(in) + n H(+)(in). The enzyme catalyses 3',3'-cGAMP(out) + n H(+)(out) = 3',3'-cGAMP(in) + n H(+)(in). In terms of biological role, proton-coupled transporter that delivers pathogen-associated or danger-associated molecular patterns to cytosolic pattern recognition receptors as part of the innate immune response to microbes or tissue injury. Has selectivity toward muropeptides that contain the amino acid diaminopimelic acid (DAP-type peptidoglycan muropeptides) including Tri-DAP and tracheal toxin (TCT), common in Gram-negative bacteria and Gram-positive bacilli. In the context of immune recognition of skin microbiota, shuttles bacterial muropeptides across the endolysosomal membranes into the cytosol for recognition by NOD1, triggering MYD88-dependent secretion of IL1A and neutrophil recruitment in a pyroptosis-type inflammatory process. To a lesser extent and redundantly, transports muramyl dipeptides derived from most bacterial proteoglycans, eliciting NOD2 receptor activation and downstream inflammatory responses. Postulated to function as a dominant importer of cyclic GMP-AMP dinucleotides (cGAMPs) in monocyte and macrophage cell lineages. Selectively imports cGAMPs derived from pathogenic bacteria such as 3'3'-cGAMP thus providing for differential immune recognition of pathogenic versus commensal bacteria. During tumorigenesis may transport extracellular tumor-derived 2'3'-cGAMP across the plasma membrane of M1-polarized macrophages to activate the anti-tumoral stimulator of interferon genes (STING) pathway. The transport mechanism, its electrogenicity and stoichiometry remain to be elucidated. This Homo sapiens (Human) protein is Solute carrier family 46 member 2.